The sequence spans 27 residues: GFGSFLGKALKAALKIGANALGGSPQQ.

In terms of tissue distribution, expressed by the skin glands.

The protein localises to the secreted. Antimicrobial peptide. This is Caerulein precursor fragment R4 from Xenopus ruwenzoriensis (Uganda clawed frog).